A 205-amino-acid polypeptide reads, in one-letter code: Large ribosomal subunit protein uL3 (205 aa).

A disordered region spans residues 126-150 (GGPKTHGQSDRHRAPGSIGSTTTPG).

Belongs to the universal ribosomal protein uL3 family. In terms of assembly, part of the 50S ribosomal subunit. Forms a cluster with proteins L14 and L19.

In terms of biological role, one of the primary rRNA binding proteins, it binds directly near the 3'-end of the 23S rRNA, where it nucleates assembly of the 50S subunit. This Dehalococcoides mccartyi (strain ATCC BAA-2100 / JCM 16839 / KCTC 5957 / BAV1) protein is Large ribosomal subunit protein uL3.